Reading from the N-terminus, the 283-residue chain is Bis(5'-nucleosyl)-tetraphosphatase, symmetrical (283 aa).

Belongs to the Ap4A hydrolase family.

It carries out the reaction P(1),P(4)-bis(5'-adenosyl) tetraphosphate + H2O = 2 ADP + 2 H(+). Functionally, hydrolyzes diadenosine 5',5'''-P1,P4-tetraphosphate to yield ADP. This Pseudomonas paraeruginosa (strain DSM 24068 / PA7) (Pseudomonas aeruginosa (strain PA7)) protein is Bis(5'-nucleosyl)-tetraphosphatase, symmetrical.